The sequence spans 226 residues: 2,3-bisphosphoglycerate-dependent phosphoglycerate mutase (226 aa).

Substrate contacts are provided by residues 8 to 15, 21 to 22, Arg-58, 109 to 112, Lys-120, 136 to 137, and 180 to 181; these read RHGQSVWN, TG, ERMY, RR, and GN. The Tele-phosphohistidine intermediate role is filled by His-9. Glu-109 (proton donor/acceptor) is an active-site residue.

The protein belongs to the phosphoglycerate mutase family. BPG-dependent PGAM subfamily.

The enzyme catalyses (2R)-2-phosphoglycerate = (2R)-3-phosphoglycerate. The protein operates within carbohydrate degradation; glycolysis; pyruvate from D-glyceraldehyde 3-phosphate: step 3/5. Catalyzes the interconversion of 2-phosphoglycerate and 3-phosphoglycerate. This chain is 2,3-bisphosphoglycerate-dependent phosphoglycerate mutase, found in Chlamydia muridarum (strain MoPn / Nigg).